A 509-amino-acid chain; its full sequence is Probable glycine dehydrogenase (decarboxylating) subunit 2 (509 aa).

Lys-278 is subject to N6-(pyridoxal phosphate)lysine.

It belongs to the GcvP family. C-terminal subunit subfamily. In terms of assembly, the glycine cleavage system is composed of four proteins: P, T, L and H. In this organism, the P 'protein' is a heterodimer of two subunits. It depends on pyridoxal 5'-phosphate as a cofactor.

It carries out the reaction N(6)-[(R)-lipoyl]-L-lysyl-[glycine-cleavage complex H protein] + glycine + H(+) = N(6)-[(R)-S(8)-aminomethyldihydrolipoyl]-L-lysyl-[glycine-cleavage complex H protein] + CO2. Its function is as follows. The glycine cleavage system catalyzes the degradation of glycine. The P protein binds the alpha-amino group of glycine through its pyridoxal phosphate cofactor; CO(2) is released and the remaining methylamine moiety is then transferred to the lipoamide cofactor of the H protein. This is Probable glycine dehydrogenase (decarboxylating) subunit 2 from Saccharolobus islandicus (strain Y.N.15.51 / Yellowstone #2) (Sulfolobus islandicus).